The chain runs to 424 residues: MDSSLAISGGPRLSNREWPRWPQPGDRALKSLEDVLTSGRWTISCAYQGRDSYERQFASAFADYCGSAMCVPISTGTASLAIALEACGVGAGDEVIVPGLSWVASASAVLGINAVPVLVDVDPATYCLDPAATEAAITERTRAITVVHAYSAVADLDALLDIARRHGLPLIEDCAHAHGAGFRGRPVGAHGAAGVFSMQGSKLLTCGEGGALVTDDADVALRAEHLRADGRVVRREPVGVGEMELEETGRMMGSNACLSEFHAAVLLDQLELLDGQNARRTRAADHLTDRLSELGMTAQATAPGTTARAYYRYLVRLPDEVLAVAPVERFAHALTAELGFAVTQTHRPLNDNPLNRPSSRRRFATDARYLERVDPSRFDLPAAKRAHESVVSFSHEVLLAPLDAIDDIARAFRKVLDNVREVSR.

The segment at 1 to 21 (MDSSLAISGGPRLSNREWPRW) is disordered. K202 is modified (N6-(pyridoxal phosphate)lysine).

Belongs to the DegT/DnrJ/EryC1 family. L-glutamine:2-deoxy-scyllo-inosose/scyllo-inosose aminotransferase subfamily. As to quaternary structure, homodimer. It depends on pyridoxal 5'-phosphate as a cofactor.

The catalysed reaction is scyllo-inosose + L-glutamine = 1-amino-1-deoxy-scyllo-inositol + 2-oxoglutaramate. It participates in antibiotic biosynthesis; streptomycin biosynthesis. In terms of biological role, catalyzes the PLP-dependent transamination of scyllo-inosose to form scyllo-inosamine. This is L-glutamine:scyllo-inosose aminotransferase (stsC) from Streptomyces griseus.